A 291-amino-acid chain; its full sequence is 4-hydroxy-tetrahydrodipicolinate synthase (291 aa).

Threonine 47 contacts pyruvate. Residue tyrosine 134 is the Proton donor/acceptor of the active site. Lysine 162 functions as the Schiff-base intermediate with substrate in the catalytic mechanism. Isoleucine 205 is a pyruvate binding site.

It belongs to the DapA family. In terms of assembly, homotetramer; dimer of dimers.

The protein localises to the cytoplasm. The enzyme catalyses L-aspartate 4-semialdehyde + pyruvate = (2S,4S)-4-hydroxy-2,3,4,5-tetrahydrodipicolinate + H2O + H(+). It participates in amino-acid biosynthesis; L-lysine biosynthesis via DAP pathway; (S)-tetrahydrodipicolinate from L-aspartate: step 3/4. In terms of biological role, catalyzes the condensation of (S)-aspartate-beta-semialdehyde [(S)-ASA] and pyruvate to 4-hydroxy-tetrahydrodipicolinate (HTPA). This chain is 4-hydroxy-tetrahydrodipicolinate synthase, found in Methanosphaerula palustris (strain ATCC BAA-1556 / DSM 19958 / E1-9c).